Consider the following 560-residue polypeptide: MRPEPGGCCCRRPMRANGCVKNGEVRNGYLRSSTATVAAAGQIHHVTENGGLYKRPFNEAFEETPMLVAVLTYVGYGVLTLFGYLRDFLRHWRIEKCHHATEREEQKDFVSLYQDFENFYTRNLYMRIRDNWNRPICSVPGAKVDIMERKSHDYNWSFKYTGNIIKGVINMGSYNYLGFARNTGSCQEAAAEVLKEYGAGVCSTRQEIGNLDKHEELEKLVARFLGVEAAMTYGMGFATNSMNIPALVGKGCLILSDELNHASLVLGARLSGATIRIFKHNNMQSLEKLLKDAIVYGQPRTRRPWKKILILVEGIYSMEGSIVRLPEVIALKKKYKAYLYLDEAHSIGALGPSGRGVVDYFGLDPEDVDVMMGTFTKSFGASGGYIGGKKELIDYLRTHSHSAVYATSMSPPVMEQIITSMKCIMGQDGTSLGKECIQQLAENTRYFRRRLKEMGFIIYGNEDSPVVPLMLYMPAKIGAFGREMLKRNIGVVVVGFPATPIIESRARFCLSAAHTKEILDTALKEIDEVGDLLQLKYSRHRLVPLLDRPFDETTYEETED.

A helical membrane pass occupies residues 65–85 (PMLVAVLTYVGYGVLTLFGYL). At Lys-377 the chain carries N6-(pyridoxal phosphate)lysine.

This sequence belongs to the class-II pyridoxal-phosphate-dependent aminotransferase family. As to quaternary structure, component of the serine palmitoyltransferase (SPT) complex, which is composed of SPTLC1, SPTLC2 or SPTLC3 and SPTSSA or SPTSSB. The heterodimer consisting of SPTLC1 and SPTLC2/SPTLC3 forms the catalytic core of the enzyme, while SPTSSA or SPTSSB subunits determine substrate specificity. SPT also interacts with ORMDL proteins, especially ORMDL3, which negatively regulate SPT activity in the presence of ceramides. Forms dimers of heterodimers with SPTLC1. It depends on pyridoxal 5'-phosphate as a cofactor. In terms of tissue distribution, expressed in a variety of tissues. Expressed in brains cortices (at protein level). Expressed in brown and white adipose tissues. Expressed in liver.

The protein resides in the endoplasmic reticulum membrane. The catalysed reaction is L-serine + hexadecanoyl-CoA + H(+) = 3-oxosphinganine + CO2 + CoA. The enzyme catalyses octadecanoyl-CoA + L-serine + H(+) = 3-oxoeicosasphinganine + CO2 + CoA. Its pathway is lipid metabolism; sphingolipid metabolism. With respect to regulation, SPT complex catalytic activity is negatively regulated by ORMDL proteins, including ORMDL3, in the presence of ceramides. This mechanism allows to maintain ceramide levels at sufficient concentrations for the production of complex sphingolipids, but which prevents the accumulation of ceramides to levels that trigger apoptosis. Its function is as follows. Component of the serine palmitoyltransferase multisubunit enzyme (SPT) that catalyzes the initial and rate-limiting step in sphingolipid biosynthesis by condensing L-serine and activated acyl-CoA (most commonly palmitoyl-CoA) to form long-chain bases. The SPT complex is composed of SPTLC1, SPTLC2 or SPTLC3 and SPTSSA or SPTSSB. Within this complex, the heterodimer consisting of SPTLC1 and SPTLC2/SPTLC3 forms the catalytic core. The composition of the serine palmitoyltransferase (SPT) complex determines the substrate preference. The SPTLC1-SPTLC2-SPTSSA complex shows a strong preference for C16-CoA substrate, while the SPTLC1-SPTLC3-SPTSSA isozyme uses both C14-CoA and C16-CoA as substrates, with a slight preference for C14-CoA. The SPTLC1-SPTLC2-SPTSSB complex shows a strong preference for C18-CoA substrate, while the SPTLC1-SPTLC3-SPTSSB isozyme displays an ability to use a broader range of acyl-CoAs, without apparent preference. Crucial for adipogenesis. The protein is Serine palmitoyltransferase 2 of Mus musculus (Mouse).